A 117-amino-acid chain; its full sequence is Large ribosomal subunit protein uL18 (117 aa).

The protein belongs to the universal ribosomal protein uL18 family. As to quaternary structure, part of the 50S ribosomal subunit; part of the 5S rRNA/L5/L18/L25 subcomplex. Contacts the 5S and 23S rRNAs.

In terms of biological role, this is one of the proteins that bind and probably mediate the attachment of the 5S RNA into the large ribosomal subunit, where it forms part of the central protuberance. In Blochmanniella floridana, this protein is Large ribosomal subunit protein uL18.